Here is a 560-residue protein sequence, read N- to C-terminus: Calcium-binding and coiled-coil domain-containing protein 1-A (560 aa).

Coiled-coil stretches lie at residues 156-192 (KATFLQNQLEMAQKERNDLMRARLALEEEVISKEKRI) and 367-480 (WWQE…DKML). The disordered stretch occupies residues 480–517 (LMEDKTDSSPPTLSVDLSDSDDESPGDEGVSQQLGPCS). Low complexity predominate over residues 487–496 (SSPPTLSVDL).

This sequence belongs to the CALCOCO family.

The protein resides in the cytoplasm. It localises to the nucleus. In terms of biological role, may function as a coactivator for aryl hydrocarbon and nuclear receptors. This Xenopus laevis (African clawed frog) protein is Calcium-binding and coiled-coil domain-containing protein 1-A (calcoco1-a).